The primary structure comprises 530 residues: Neutral amino acid transporter A (530 aa).

Met1 carries the post-translational modification N-acetylmethionine. A compositionally biased stretch (polar residues) spans 1–10 (MEKSSETNGY). Residues 1–28 (MEKSSETNGYLDSAQEGPAAGPGEPGTT) form a disordered region. Topologically, residues 1–41 (MEKSSETNGYLDSAQEGPAAGPGEPGTTARRAGRCAGFLRR) are cytoplasmic. Low complexity predominate over residues 16-28 (EGPAAGPGEPGTT). Transmembrane regions (helical) follow at residues 42 to 62 (HGLV…GAAL), 88 to 108 (MIIL…LDAS), and 119 to 139 (AYFG…AFII). Residues 140–216 (KPGSGSQTLQ…VTIEKIPIGT (77 aa)) lie on the Extracellular side of the membrane. Asn201 carries an N-linked (GlcNAc...) asparagine glycan. 6 helical membrane-spanning segments follow: residues 217–237 (EIEG…GVAL), 257–277 (ATMV…MFLV), 298–318 (IFTS…LIYF), 328–348 (FLLG…SSAT), 373–393 (IGAT…AVFI), and 418–438 (VGAA…LEAI). The disordered stretch occupies residues 488 to 530 (ELSEVKVEAIPNSKSEEETSPLVTHPNPTGPAASTPESKESVL). Ser507, Ser525, and Ser528 each carry phosphoserine.

The protein belongs to the dicarboxylate/amino acid:cation symporter (DAACS) (TC 2.A.23) family. SLC1A4 subfamily.

It localises to the membrane. Its subcellular location is the melanosome. It catalyses the reaction L-threonine(in) + Na(+)(in) = L-threonine(out) + Na(+)(out). The enzyme catalyses L-serine(in) + Na(+)(in) = L-serine(out) + Na(+)(out). The catalysed reaction is L-cysteine(in) + Na(+)(in) = L-cysteine(out) + Na(+)(out). It carries out the reaction L-alanine(in) + Na(+)(in) = L-alanine(out) + Na(+)(out). It catalyses the reaction L-proline(in) + Na(+)(in) = L-proline(out) + Na(+)(out). The enzyme catalyses 4-hydroxy-L-proline(in) + Na(+)(in) = 4-hydroxy-L-proline(out) + Na(+)(out). Sodium-dependent neutral amino-acid transporter that mediates transport of alanine, serine, cysteine, proline, hydroxyproline and threonine. The polypeptide is Neutral amino acid transporter A (SLC1A4) (Bos taurus (Bovine)).